A 309-amino-acid polypeptide reads, in one-letter code: Probable lipid kinase YegS-like (309 aa).

One can recognise a DAGKc domain in the interval 1-133; sequence MPLTHIRLLL…IDIIRANNNY (133 aa). Residues serine 39, 65 to 71, and threonine 95 each bind ATP; that span reads GDGSLNE. Leucine 214, aspartate 217, and leucine 219 together coordinate Mg(2+). Glutamate 273 serves as the catalytic Proton acceptor.

This sequence belongs to the diacylglycerol/lipid kinase family. YegS lipid kinase subfamily. It depends on Mg(2+) as a cofactor. The cofactor is Ca(2+).

Its subcellular location is the cytoplasm. In terms of biological role, probably phosphorylates lipids; the in vivo substrate is unknown. This is Probable lipid kinase YegS-like from Shewanella frigidimarina (strain NCIMB 400).